A 403-amino-acid polypeptide reads, in one-letter code: Argininosuccinate synthase (403 aa).

Residues 12–20 (AYSGGLDTS) and A39 contribute to the ATP site. Positions 90 and 95 each coordinate L-citrulline. G120 serves as a coordination point for ATP. L-aspartate contacts are provided by T122, N126, and D127. Residue N126 participates in L-citrulline binding. Residues R130, S182, S191, E267, and Y279 each coordinate L-citrulline.

It belongs to the argininosuccinate synthase family. Type 1 subfamily. As to quaternary structure, homotetramer.

It localises to the cytoplasm. The enzyme catalyses L-citrulline + L-aspartate + ATP = 2-(N(omega)-L-arginino)succinate + AMP + diphosphate + H(+). The protein operates within amino-acid biosynthesis; L-arginine biosynthesis; L-arginine from L-ornithine and carbamoyl phosphate: step 2/3. This is Argininosuccinate synthase from Ruthia magnifica subsp. Calyptogena magnifica.